The chain runs to 267 residues: Tetrahydromethanopterin S-methyltransferase subunit C (267 aa).

Transmembrane regions (helical) follow at residues 19-39, 75-95, 97-117, 140-160, 162-182, 198-218, and 221-241; these read IMALGIVGGLVGIYLGNFAPP, IGMLALGMGILAALFGLSVGG, AGPIVAIVVAAIIGGVIGALA, TLVILGLSVVIAGSFDFASVV, YVVANGYIALIFIIGGMGILH, LMLAVEKGAIALIIAGFASSL, and GLMAAGLNMLIGIIIWYVAFS.

The protein belongs to the MtrC family. In terms of assembly, the complex is composed of 8 subunits; MtrA, MtrB, MtrC, MtrD, MtrE, MtrF, MtrG and MtrH.

It is found in the cell membrane. It catalyses the reaction 5-methyl-5,6,7,8-tetrahydromethanopterin + coenzyme M + 2 Na(+)(in) = 5,6,7,8-tetrahydromethanopterin + methyl-coenzyme M + 2 Na(+)(out). Its pathway is one-carbon metabolism; methanogenesis from CO(2); methyl-coenzyme M from 5,10-methylene-5,6,7,8-tetrahydromethanopterin: step 2/2. Its function is as follows. Part of a complex that catalyzes the formation of methyl-coenzyme M and tetrahydromethanopterin from coenzyme M and methyl-tetrahydromethanopterin. This is an energy-conserving, sodium-ion translocating step. The protein is Tetrahydromethanopterin S-methyltransferase subunit C of Methanosarcina barkeri (strain Fusaro / DSM 804).